An 80-amino-acid polypeptide reads, in one-letter code: Acyl carrier protein (80 aa).

The Carrier domain occupies D4–K79. S39 carries the O-(pantetheine 4'-phosphoryl)serine modification.

Belongs to the acyl carrier protein (ACP) family. 4'-phosphopantetheine is transferred from CoA to a specific serine of apo-ACP by AcpS. This modification is essential for activity because fatty acids are bound in thioester linkage to the sulfhydryl of the prosthetic group.

It is found in the cytoplasm. It functions in the pathway lipid metabolism; fatty acid biosynthesis. Functionally, carrier of the growing fatty acid chain in fatty acid biosynthesis. The protein is Acyl carrier protein of Borreliella burgdorferi (strain ATCC 35210 / DSM 4680 / CIP 102532 / B31) (Borrelia burgdorferi).